Consider the following 314-residue polypeptide: Malate dehydrogenase (314 aa).

NAD(+) contacts are provided by residues 12–17 (GAGFTG) and Asp-36. Positions 87 and 93 each coordinate substrate. Residues Asn-100 and 123–125 (LTN) each bind NAD(+). Asn-125 is a substrate binding site. Position 149 is a phosphoserine (Ser-149). Position 156 (Arg-156) interacts with substrate. His-180 serves as the catalytic Proton acceptor.

It belongs to the LDH/MDH superfamily. MDH type 3 family.

The enzyme catalyses (S)-malate + NAD(+) = oxaloacetate + NADH + H(+). Catalyzes the reversible oxidation of malate to oxaloacetate. In Halalkalibacterium halodurans (strain ATCC BAA-125 / DSM 18197 / FERM 7344 / JCM 9153 / C-125) (Bacillus halodurans), this protein is Malate dehydrogenase.